Here is a 160-residue protein sequence, read N- to C-terminus: Endoribonuclease YbeY (160 aa).

3 residues coordinate Zn(2+): histidine 121, histidine 125, and histidine 131.

This sequence belongs to the endoribonuclease YbeY family. Zn(2+) is required as a cofactor.

The protein resides in the cytoplasm. Its function is as follows. Single strand-specific metallo-endoribonuclease involved in late-stage 70S ribosome quality control and in maturation of the 3' terminus of the 16S rRNA. The chain is Endoribonuclease YbeY from Hydrogenovibrio crunogenus (strain DSM 25203 / XCL-2) (Thiomicrospira crunogena).